A 164-amino-acid polypeptide reads, in one-letter code: Putative F-box protein At1g59675 (164 aa).

The F-box domain maps to 9 to 56 (SQSDHVPLDLTIEILSRLPAKSVGRFRSVSKLWSANTTSQNFINSFAT).

The sequence is that of Putative F-box protein At1g59675 from Arabidopsis thaliana (Mouse-ear cress).